The primary structure comprises 222 residues: UPF0128 protein PYRAB08320 (222 aa).

Belongs to the UPF0128 family.

The protein is UPF0128 protein PYRAB08320 of Pyrococcus abyssi (strain GE5 / Orsay).